The following is a 768-amino-acid chain: P-selectin (768 aa).

An N-terminal signal peptide occupies residues 1–41; the sequence is MAGCPKGSWKPRLRSVVLGAAQLIWLSALISELVNRKKVAT. Residues 42 to 709 are Extracellular-facing; the sequence is WTYNYSTKAY…QAGTLTIQEA (668 aa). N45, N54, and N107 each carry an N-linked (GlcNAc...) asparagine glycan. The 101-residue stretch at 58–158 folds into the C-type lectin domain; it reads AFCKRHFTDL…PCFKRKRALC (101 aa). Cystine bridges form between C60–C158, C131–C150, C168–C183, C185–C194, C200–C244, C230–C257, C262–C306, C292–C319, C324–C368, C354–C381, C386–C430, C416–C443, C448–C492, C478–C505, C510–C554, C540–C567, C580–C624, C610–C637, C642–C686, and C672–C699. 3 residues coordinate Ca(2+): E121, N123, and N124. N123 is a binding site for a carbohydrate. Residues E133 and N146 each contribute to the a carbohydrate site. Ca(2+)-binding residues include N146 and D147. The EGF-like domain maps to 159-195; sequence YTASCQDMSCNSQGERIETIGSYTCSCYPGFYGPECE. 8 Sushi domains span residues 198–259, 260–321, 322–383, 384–445, 446–507, 508–569, 578–639, and 640–701; these read QECG…QCKA, VQCQ…TCEA, IACE…VCEA, LQCQ…ECQA, VSCT…MCEA, IKCP…TCKG, VRCP…VCRA, and VKCS…TCQA. N-linked (GlcNAc...) asparagine glycosylation is present at N212. An N-linked (GlcNAc...) asparagine glycan is attached at N347. An N-linked (GlcNAc...) asparagine glycan is attached at N456. Residue N603 is glycosylated (N-linked (GlcNAc...) asparagine). N-linked (GlcNAc...) asparagine glycans are attached at residues N654, N661, and N679. The chain crosses the membrane as a helical span at residues 710–733; it reads LTYLGGALASTSGLAVGGTLLALL. Residues 734–768 are Cytoplasmic-facing; the sequence is RKRLRKKDDGKCPLNPHSHLGTYGVFTNAAYDPTP. C745 carries S-palmitoyl cysteine; alternate lipidation. C745 carries S-stearoyl cysteine; alternate lipidation. The short motif at 756–759 is the Endocytosis signal element; that stretch reads YGVF. The interaction with SNX17 stretch occupies residues 759–768; sequence FTNAAYDPTP.

It belongs to the selectin/LECAM family. Interacts with SNX17. Interacts with SELPLG/PSGL1 and PODXL2 and mediates neutrophil adhesion and leukocyte rolling. This interaction requires the sialyl-Lewis X epitope of SELPLG and PODXL2, and specific tyrosine sulfation on SELPLG. Interacts (via C-type lectin domain) with alpha-IIb/beta3 integrin ITGA2B:ITGB3 and alpha-V/beta-3 integrin ITGAV:ITGB3. Interacts with alpha5/beta1 integrin ITGA5:ITGB1 and alpha4/beta1 integrin ITGA4:ITGB. Not detected in the absence of exposure to lipopolysaccharide (LPS). Detected only after exposure to lipopolysaccharide (LPS) in the tissues examined: spleen, lung, brain, liver, heart, kidney, thymus and small intestine.

The protein localises to the cell membrane. Ca(2+)-dependent receptor for myeloid cells that binds to carbohydrates on neutrophils and monocytes. Mediates the interaction of activated endothelial cells or platelets with leukocytes. The ligand recognized is sialyl-Lewis X. Mediates rapid rolling of leukocyte rolling over vascular surfaces during the initial steps in inflammation through interaction with SELPLG. Mediates cell-cell interactions and cell adhesion via the interaction with integrin alpha-IIb/beta3 (ITGA2B:ITGB3) and integrin alpha-V/beta-3 (ITGAV:ITGB3). The polypeptide is P-selectin (Selp) (Rattus norvegicus (Rat)).